A 1487-amino-acid polypeptide reads, in one-letter code: Chromosome partition protein MukB (1487 aa).

34 to 41 (GGNGAGKS) contacts ATP. Coiled coils occupy residues 297-458 (GSRE…TNAL), 506-601 (RESQ…LEAI), 637-666 (LEQE…RLAS), 781-806 (RAAR…AKAA), 836-1109 (EQAL…ELRT), and 1210-1266 (VEAI…LSNI). The segment at 667–784 (PGGSNDPRLK…EIPLFGRAAR (118 aa)) is flexible hinge.

The protein belongs to the SMC family. MukB subfamily. Homodimerization via its hinge domain. Binds to DNA via its C-terminal region. Interacts, and probably forms a ternary complex, with MukE and MukF via its C-terminal region. The complex formation is stimulated by calcium or magnesium. Interacts with tubulin-related protein FtsZ.

It localises to the cytoplasm. It is found in the nucleoid. Its function is as follows. Plays a central role in chromosome condensation, segregation and cell cycle progression. Functions as a homodimer, which is essential for chromosome partition. Involved in negative DNA supercoiling in vivo, and by this means organize and compact chromosomes. May achieve or facilitate chromosome segregation by condensation DNA from both sides of a centrally located replisome during cell division. In Vibrio parahaemolyticus serotype O3:K6 (strain RIMD 2210633), this protein is Chromosome partition protein MukB.